The primary structure comprises 122 residues: Large ribosomal subunit protein uL14 (122 aa).

This sequence belongs to the universal ribosomal protein uL14 family. As to quaternary structure, part of the 50S ribosomal subunit. Forms a cluster with proteins L3 and L19. In the 70S ribosome, L14 and L19 interact and together make contacts with the 16S rRNA in bridges B5 and B8.

Its function is as follows. Binds to 23S rRNA. Forms part of two intersubunit bridges in the 70S ribosome. This is Large ribosomal subunit protein uL14 from Syntrophus aciditrophicus (strain SB).